The primary structure comprises 363 residues: Histidinol-phosphate aminotransferase (363 aa).

K220 carries the N6-(pyridoxal phosphate)lysine modification.

The protein belongs to the class-II pyridoxal-phosphate-dependent aminotransferase family. Histidinol-phosphate aminotransferase subfamily. In terms of assembly, homodimer. Pyridoxal 5'-phosphate serves as cofactor.

The enzyme catalyses L-histidinol phosphate + 2-oxoglutarate = 3-(imidazol-4-yl)-2-oxopropyl phosphate + L-glutamate. The protein operates within amino-acid biosynthesis; L-histidine biosynthesis; L-histidine from 5-phospho-alpha-D-ribose 1-diphosphate: step 7/9. This Chlorobium chlorochromatii (strain CaD3) protein is Histidinol-phosphate aminotransferase.